Here is a 478-residue protein sequence, read N- to C-terminus: BTB/POZ domain-containing protein 17 (478 aa).

The N-terminal stretch at 1–28 is a signal peptide; sequence MLRKGSCKPGSWGSFWAILALVGLVTRA. Residues N61, N100, N195, and N307 are each glycosylated (N-linked (GlcNAc...) asparagine). The 70-residue stretch at 63 to 132 folds into the BTB domain; the sequence is SDVILRVQAV…LYCGELTVLL (70 aa). The BACK domain maps to 169–269; the sequence is AVGWYHYAVS…IPPAQLFQLQ (101 aa).

The protein localises to the secreted. This chain is BTB/POZ domain-containing protein 17 (Btbd17), found in Mus musculus (Mouse).